A 214-amino-acid chain; its full sequence is ATP phosphoribosyltransferase (214 aa).

Belongs to the ATP phosphoribosyltransferase family. Short subfamily. In terms of assembly, heteromultimer composed of HisG and HisZ subunits.

The protein resides in the cytoplasm. The catalysed reaction is 1-(5-phospho-beta-D-ribosyl)-ATP + diphosphate = 5-phospho-alpha-D-ribose 1-diphosphate + ATP. It participates in amino-acid biosynthesis; L-histidine biosynthesis; L-histidine from 5-phospho-alpha-D-ribose 1-diphosphate: step 1/9. In terms of biological role, catalyzes the condensation of ATP and 5-phosphoribose 1-diphosphate to form N'-(5'-phosphoribosyl)-ATP (PR-ATP). Has a crucial role in the pathway because the rate of histidine biosynthesis seems to be controlled primarily by regulation of HisG enzymatic activity. The sequence is that of ATP phosphoribosyltransferase from Ruminiclostridium cellulolyticum (strain ATCC 35319 / DSM 5812 / JCM 6584 / H10) (Clostridium cellulolyticum).